The sequence spans 258 residues: MISKNFFIESVNKTAIASAFSRAAHSYEQAASLQKEVGFRLLQMTGDIKKSWVLDAGCGTGYFSQFWRQKGNRVLSLDLSFEMLKKAKKKSAAQAYLLADIEHLPILDQKIDLCFSNMAIQWCDDLKVVLAEFHRVTRSGGVILFSTLAMGSLKELAQAWQKVDEEPHINRFLSFEEIQQICTPYHSELKMCLSKVCFPDLRSLIQSLRGVGATHLHRGRKVGLSSRARIQKLENAYPVKFGEYPLSYQLVYGIIYRD.

It belongs to the methyltransferase superfamily.

The catalysed reaction is malonyl-[ACP] + S-adenosyl-L-methionine = malonyl-[ACP] methyl ester + S-adenosyl-L-homocysteine. Its pathway is cofactor biosynthesis; biotin biosynthesis. Functionally, converts the free carboxyl group of a malonyl-thioester to its methyl ester by transfer of a methyl group from S-adenosyl-L-methionine (SAM). It allows to synthesize pimeloyl-ACP via the fatty acid synthetic pathway. This chain is Malonyl-[acyl-carrier protein] O-methyltransferase, found in Hamiltonella defensa subsp. Acyrthosiphon pisum (strain 5AT).